Here is a 548-residue protein sequence, read N- to C-terminus: CTP synthase (548 aa).

Residues methionine 1–cysteine 270 are amidoligase domain. Serine 17 provides a ligand contact to CTP. Residue serine 17 coordinates UTP. Residues serine 18 to leucine 23 and aspartate 75 contribute to the ATP site. Residues aspartate 75 and glutamate 143 each contribute to the Mg(2+) site. Residues aspartate 150–glutamate 152, lysine 190–glutamine 195, and lysine 227 contribute to the CTP site. Residues lysine 190–glutamine 195 and lysine 227 contribute to the UTP site. The Glutamine amidotransferase type-1 domain maps to tyrosine 305 to serine 548. Glycine 356 provides a ligand contact to L-glutamine. Cysteine 383 functions as the Nucleophile; for glutamine hydrolysis in the catalytic mechanism. L-glutamine-binding positions include phenylalanine 384 to glutamine 387, glutamate 407, and arginine 475. Catalysis depends on residues histidine 521 and glutamate 523.

The protein belongs to the CTP synthase family. In terms of assembly, homotetramer.

It catalyses the reaction UTP + L-glutamine + ATP + H2O = CTP + L-glutamate + ADP + phosphate + 2 H(+). The enzyme catalyses L-glutamine + H2O = L-glutamate + NH4(+). The catalysed reaction is UTP + NH4(+) + ATP = CTP + ADP + phosphate + 2 H(+). It participates in pyrimidine metabolism; CTP biosynthesis via de novo pathway; CTP from UDP: step 2/2. Allosterically activated by GTP, when glutamine is the substrate; GTP has no effect on the reaction when ammonia is the substrate. The allosteric effector GTP functions by stabilizing the protein conformation that binds the tetrahedral intermediate(s) formed during glutamine hydrolysis. Inhibited by the product CTP, via allosteric rather than competitive inhibition. Functionally, catalyzes the ATP-dependent amination of UTP to CTP with either L-glutamine or ammonia as the source of nitrogen. Regulates intracellular CTP levels through interactions with the four ribonucleotide triphosphates. In Neorickettsia sennetsu (strain ATCC VR-367 / Miyayama) (Ehrlichia sennetsu), this protein is CTP synthase.